Here is a 67-residue protein sequence, read N- to C-terminus: ATP synthase F(0) complex subunit 8 (67 aa).

The chain crosses the membrane as a helical span at residues 8-24; sequence TWFITIVSMLLSLFILM. Lys-54 carries the post-translational modification N6-acetyllysine; alternate. Residue Lys-54 is modified to N6-succinyllysine; alternate. Position 57 is an N6-acetyllysine (Lys-57).

This sequence belongs to the ATPase protein 8 family. Component of the ATP synthase complex composed at least of ATP5F1A/subunit alpha, ATP5F1B/subunit beta, ATP5MC1/subunit c (homooctomer), MT-ATP6/subunit a, MT-ATP8/subunit 8, ATP5ME/subunit e, ATP5MF/subunit f, ATP5MG/subunit g, ATP5MK/subunit k, ATP5MJ/subunit j, ATP5F1C/subunit gamma, ATP5F1D/subunit delta, ATP5F1E/subunit epsilon, ATP5PF/subunit F6, ATP5PB/subunit b, ATP5PD/subunit d, ATP5PO/subunit OSCP. ATP synthase complex consists of a soluble F(1) head domain (subunits alpha(3) and beta(3)) - the catalytic core - and a membrane F(0) domain - the membrane proton channel (subunits c, a, 8, e, f, g, k and j). These two domains are linked by a central stalk (subunits gamma, delta, and epsilon) rotating inside the F1 region and a stationary peripheral stalk (subunits F6, b, d, and OSCP). Interacts with PRICKLE3.

Its subcellular location is the mitochondrion membrane. In terms of biological role, subunit 8, of the mitochondrial membrane ATP synthase complex (F(1)F(0) ATP synthase or Complex V) that produces ATP from ADP in the presence of a proton gradient across the membrane which is generated by electron transport complexes of the respiratory chain. ATP synthase complex consist of a soluble F(1) head domain - the catalytic core - and a membrane F(1) domain - the membrane proton channel. These two domains are linked by a central stalk rotating inside the F(1) region and a stationary peripheral stalk. During catalysis, ATP synthesis in the catalytic domain of F(1) is coupled via a rotary mechanism of the central stalk subunits to proton translocation. In vivo, can only synthesize ATP although its ATP hydrolase activity can be activated artificially in vitro. Part of the complex F(0) domain. The protein is ATP synthase F(0) complex subunit 8 of Dasypus novemcinctus (Nine-banded armadillo).